A 75-amino-acid polypeptide reads, in one-letter code: MKASVHPDYQTVKVTCSCGEVFETRSTLCKDLNIEVCSMCHPFYTGKQKLVDTGGRVQKFRDRYNMRTGQAKSKE.

Residues Cys16, Cys18, Cys37, and Cys40 each contribute to the Zn(2+) site.

This sequence belongs to the bacterial ribosomal protein bL31 family. Type A subfamily. As to quaternary structure, part of the 50S ribosomal subunit. Zn(2+) serves as cofactor.

Its function is as follows. Binds the 23S rRNA. This chain is Large ribosomal subunit protein bL31, found in Legionella pneumophila (strain Paris).